The chain runs to 1023 residues: 2-oxoglutarate dehydrogenase complex component E1 (1023 aa).

The N-terminal 40 residues, 1-40 (MFHLRTCAAKLRPLTASQTVKTFSQNRPAAARTFGQIRCY), are a transit peptide targeting the mitochondrion. An N6-succinyllysine modification is found at K74. The residue at position 100 (S100) is a Phosphoserine. Ca(2+) contacts are provided by H143, D156, and D158. Residue R312 coordinates thiamine diphosphate. K401 bears the N6-acetyllysine mark. Residues D411, N444, and I446 each coordinate thiamine diphosphate. The Mg(2+) site is built by D411, N444, and I446. Residue K534 forms a Glycyl lysine isopeptide (Lys-Gly) (interchain with G-Cter in ubiquitin) linkage. K564 carries the post-translational modification N6-succinyllysine. Position 676 (Q676) interacts with thiamine diphosphate. K970 carries the post-translational modification N6-acetyllysine.

The protein belongs to the alpha-ketoglutarate dehydrogenase family. Homodimer. The 2-oxoglutarate dehydrogenase complex is composed of OGDH (2-oxoglutarate dehydrogenase; E1), DLST (dihydrolipoamide succinyltransferase; E2), DLD (dihydrolipoamide dehydrogenase; E3) and the assembly factor KGD4. It contains multiple copies of the three enzymatic components (E1, E2 and E3). In the nucleus, the 2-oxoglutarate dehydrogenase complex associates with KAT2A. Interacts with ABHD11; this interaction maintains the functional lipoylation of the 2-oxoglutarate dehydrogenase complex. The cofactor is thiamine diphosphate. Requires Mg(2+) as cofactor.

The protein resides in the mitochondrion. Its subcellular location is the nucleus. The enzyme catalyses N(6)-[(R)-lipoyl]-L-lysyl-[protein] + 2-oxoglutarate + H(+) = N(6)-[(R)-S(8)-succinyldihydrolipoyl]-L-lysyl-[protein] + CO2. With respect to regulation, calcium ions and ADP stimulate, whereas ATP and NADH reduce catalytic activity. In terms of biological role, 2-oxoglutarate dehydrogenase (E1o) component of the 2-oxoglutarate dehydrogenase complex (OGDHC). Participates in the first step, rate limiting for the overall conversion of 2-oxoglutarate to succinyl-CoA and CO(2) catalyzed by the whole OGDHC. Catalyzes the irreversible decarboxylation of 2-oxoglutarate (alpha-ketoglutarate) via the thiamine diphosphate (ThDP) cofactor and subsequent transfer of the decarboxylated acyl intermediate on an oxidized dihydrolipoyl group that is covalently amidated to the E2 enzyme (dihydrolipoyllysine-residue succinyltransferase or DLST). Plays a key role in the Krebs (citric acid) cycle, which is a common pathway for oxidation of fuel molecules, including carbohydrates, fatty acids, and amino acids. Can catalyze the decarboxylation of 2-oxoadipate in vitro, but at a much lower rate than 2-oxoglutarate. Mainly active in the mitochondrion. A fraction of the 2-oxoglutarate dehydrogenase complex also localizes in the nucleus and is required for lysine succinylation of histones: associates with KAT2A on chromatin and provides succinyl-CoA to histone succinyltransferase KAT2A. In Bos taurus (Bovine), this protein is 2-oxoglutarate dehydrogenase complex component E1.